The chain runs to 857 residues: Protein ARG5,6, mitochondrial (857 aa).

Residues 341–492 (INRNSLRDFG…FDSSSIGSSL (152 aa)) enclose the N-acetyltransferase domain. Positions 509–532 (GFHHSTVRRNTNPNPPLSEGKQTE) are disordered. Cys-669 is an active-site residue.

This sequence in the N-terminal section; belongs to the acetylglutamate kinase family. The protein in the C-terminal section; belongs to the NAGSA dehydrogenase family.

The protein localises to the mitochondrion. It catalyses the reaction N-acetyl-L-glutamate 5-semialdehyde + phosphate + NADP(+) = N-acetyl-L-glutamyl 5-phosphate + NADPH + H(+). It carries out the reaction N-acetyl-L-glutamate + ATP = N-acetyl-L-glutamyl 5-phosphate + ADP. It participates in amino-acid biosynthesis; L-arginine biosynthesis; N(2)-acetyl-L-ornithine from L-glutamate: step 2/4. It functions in the pathway amino-acid biosynthesis; L-arginine biosynthesis; N(2)-acetyl-L-ornithine from L-glutamate: step 3/4. The chain is Protein ARG5,6, mitochondrial (ARG5,6) from Candida albicans (Yeast).